The primary structure comprises 1009 residues: Protein translocase subunit SecA (1009 aa).

Residues Q86, 104-108 (GEGKT), and D497 contribute to the ATP site. Disordered regions lie at residues 869 to 894 (AVPQ…GQQP) and 949 to 1009 (ERRP…RNAG). 2 stretches are compositionally biased toward low complexity: residues 883–894 (PVPAATAPGQQP) and 953–973 (SGAA…AGAG). Zn(2+) contacts are provided by C990, C992, C1001, and H1002.

The protein belongs to the SecA family. Monomer and homodimer. Part of the essential Sec protein translocation apparatus which comprises SecA, SecYEG and auxiliary proteins SecDF. Other proteins may also be involved. Zn(2+) is required as a cofactor.

The protein localises to the cell membrane. It is found in the cytoplasm. It catalyses the reaction ATP + H2O + cellular proteinSide 1 = ADP + phosphate + cellular proteinSide 2.. Part of the Sec protein translocase complex. Interacts with the SecYEG preprotein conducting channel. Has a central role in coupling the hydrolysis of ATP to the transfer of proteins into and across the cell membrane, serving as an ATP-driven molecular motor driving the stepwise translocation of polypeptide chains across the membrane. The chain is Protein translocase subunit SecA from Acidothermus cellulolyticus (strain ATCC 43068 / DSM 8971 / 11B).